A 440-amino-acid polypeptide reads, in one-letter code: Enolase 1 (440 aa).

H161 and E170 together coordinate substrate. E213 functions as the Proton donor in the catalytic mechanism. The Mg(2+) site is built by D248, E297, and D324. The substrate site is built by E297 and D324. The active-site Proton acceptor is K349. Residues 376–379 and K400 contribute to the substrate site; that span reads SHRS.

The protein belongs to the enolase family. In terms of assembly, homodimer. Mg(2+) is required as a cofactor.

It localises to the cytoplasm. The catalysed reaction is (2R)-2-phosphoglycerate = phosphoenolpyruvate + H2O. It functions in the pathway carbohydrate degradation; glycolysis; pyruvate from D-glyceraldehyde 3-phosphate: step 4/5. The protein is Enolase 1 (ENO1) of Candida albicans (strain SC5314 / ATCC MYA-2876) (Yeast).